The chain runs to 279 residues: MRGKMKLSFIENDSVRKTTFTKRKKGMLKKFNELVTLCGVDACAVIRSPYNSIQEPWPSREGVEEVMSKFMEFSVLDRTKKMVDQETFLRQRIAKETERLQKLRDENRNSQIRDLMFGCLKGEVDVSHLHGRDLLDLNVFLNKYLNGVIRRVEILKENGESSSSVPPPIGVAPTVVDASVPIGFDGRMIQDQNQNQQEPVQFQYQALYDFYDQIPKKLHDFNMKMNIDPNQSMNLDLNDGEDEGIPCMDNNNYHPEIDCLATVTTAPTDVCAPNIINDL.

Residues 1-60 (MRGKMKLSFIENDSVRKTTFTKRKKGMLKKFNELVTLCGVDACAVIRSPYNSIQEPWPSR) enclose the MADS-box domain.

In terms of assembly, interacts with AGL61/DIANA and AGL62. In terms of tissue distribution, male gametophyte, embryo and endosperm.

Its subcellular location is the nucleus. Probable transcription factor involved in the development of gametophytes and seeds. The chain is MADS-box transcription factor PHERES 1 (PHE1) from Arabidopsis thaliana (Mouse-ear cress).